The chain runs to 45 residues: Endo-1,4-beta-xylanase Xyn10A (45 aa).

It belongs to the glycosyl hydrolase 10 (cellulase F) family.

The protein localises to the secreted. It localises to the extracellular space. It carries out the reaction Endohydrolysis of (1-&gt;4)-beta-D-xylosidic linkages in xylans.. The catalysed reaction is Endohydrolysis of (1-&gt;4)-beta-D-glucosidic linkages in cellulose, lichenin and cereal beta-D-glucans.. The protein operates within glycan degradation; xylan degradation. Functionally, has xylanase, avicelase and cellobiohydrolase activity. This chain is Endo-1,4-beta-xylanase Xyn10A, found in Gloeophyllum trabeum (Brown rot fungus).